A 234-amino-acid polypeptide reads, in one-letter code: Adenosine 5'-phosphosulfate reductase (234 aa).

Residues cysteine 120, cysteine 121, cysteine 203, and cysteine 206 each contribute to the [4Fe-4S] cluster site. Cysteine 229 functions as the Nucleophile; cysteine thiosulfonate intermediate in the catalytic mechanism.

It belongs to the PAPS reductase family. CysH subfamily. [4Fe-4S] cluster is required as a cofactor.

Its subcellular location is the cytoplasm. The catalysed reaction is [thioredoxin]-disulfide + sulfite + AMP + 2 H(+) = adenosine 5'-phosphosulfate + [thioredoxin]-dithiol. It participates in sulfur metabolism; hydrogen sulfide biosynthesis; sulfite from sulfate. Functionally, catalyzes the formation of sulfite from adenosine 5'-phosphosulfate (APS) using thioredoxin as an electron donor. This Bacillus cereus (strain B4264) protein is Adenosine 5'-phosphosulfate reductase.